The sequence spans 412 residues: Putative odorant receptor 85d (412 aa).

Residues M1–T56 are Cytoplasmic-facing. The chain crosses the membrane as a helical span at residues F57–L77. At A78 to N84 the chain is on the extracellular side. A helical membrane pass occupies residues F85–I105. The Cytoplasmic portion of the chain corresponds to W106–Y152. A helical membrane pass occupies residues F153–V173. Residues C174–S219 lie on the Extracellular side of the membrane. Residues G220 to I240 traverse the membrane as a helical segment. Residues R241–E282 are Cytoplasmic-facing. The helical transmembrane segment at I283–G303 threads the bilayer. Topologically, residues F304–N314 are extracellular. Residues L315–H335 traverse the membrane as a helical segment. Topologically, residues A336 to T382 are cytoplasmic. Residues M383–F403 form a helical membrane-spanning segment. The Extracellular portion of the chain corresponds to A404 to N412.

Belongs to the insect chemoreceptor superfamily. Heteromeric odorant receptor channel (TC 1.A.69) family. Or49a subfamily. As to quaternary structure, interacts with Orco. Complexes exist early in the endomembrane system in olfactory sensory neurons (OSNs), coupling these complexes to the conserved ciliary trafficking pathway. In terms of tissue distribution, expressed in olfactory sensory neurons in the maxillary palp.

The protein resides in the cell membrane. Its function is as follows. Odorant receptor which mediates acceptance or avoidance behavior, depending on its substrates. The odorant receptor repertoire encodes a large collection of odor stimuli that vary widely in identity, intensity, and duration. May form a complex with Orco to form odorant-sensing units, providing sensitive and prolonged odorant signaling and calcium permeability. This is Putative odorant receptor 85d (Or85d) from Drosophila melanogaster (Fruit fly).